The sequence spans 559 residues: Formate--tetrahydrofolate ligase (559 aa).

68–75 (TPAGEGKT) contacts ATP.

This sequence belongs to the formate--tetrahydrofolate ligase family.

It carries out the reaction (6S)-5,6,7,8-tetrahydrofolate + formate + ATP = (6R)-10-formyltetrahydrofolate + ADP + phosphate. It functions in the pathway one-carbon metabolism; tetrahydrofolate interconversion. This Mesorhizobium japonicum (strain LMG 29417 / CECT 9101 / MAFF 303099) (Mesorhizobium loti (strain MAFF 303099)) protein is Formate--tetrahydrofolate ligase.